Reading from the N-terminus, the 658-residue chain is Palmitoyltransferase ZDHHC5-B (658 aa).

Residues Met1–Arg24 are Cytoplasmic-facing. A helical membrane pass occupies residues Tyr25–Phe45. Over Thr46–Ser56 the chain is Extracellular. The chain crosses the membrane as a helical span at residues Phe57–Thr77. Over Phe78–Tyr159 the chain is Cytoplasmic. The DHHC domain occupies Lys115–Leu165. Residue Cys145 is the S-palmitoyl cysteine intermediate of the active site. The helical transmembrane segment at Phe160–Leu180 threads the bilayer. Over Tyr181–Cys202 the chain is Extracellular. Residues Val203–Ala223 traverse the membrane as a helical segment. At Arg224 to Val658 the chain is on the cytoplasmic side. Disordered regions lie at residues Glu306–Ser419, Glu490–Ala522, and Gln540–Val658. A compositionally biased stretch (polar residues) spans Pro360–Pro398. Residues Gly407–Ser419 are compositionally biased toward gly residues. Positions Ser565–Ser575 are enriched in pro residues. Residues Ser619–Asn633 are compositionally biased toward polar residues. The segment covering Thr634–Lys644 has biased composition (basic residues).

The protein belongs to the DHHC palmitoyltransferase family. ERF2/ZDHHC9 subfamily.

It localises to the cell membrane. The catalysed reaction is L-cysteinyl-[protein] + hexadecanoyl-CoA = S-hexadecanoyl-L-cysteinyl-[protein] + CoA. Functionally, palmitoyltransferase that catalyzes the addition of palmitate onto various protein substrates and is involved in a variety of cellular processes. This Danio rerio (Zebrafish) protein is Palmitoyltransferase ZDHHC5-B.